Reading from the N-terminus, the 931-residue chain is Protein translocase subunit SecA (931 aa).

ATP contacts are provided by residues glutamine 87, glycine 105–threonine 109, and aspartate 515. Positions 915, 917, 926, and 927 each coordinate Zn(2+).

Belongs to the SecA family. In terms of assembly, monomer and homodimer. Part of the essential Sec protein translocation apparatus which comprises SecA, SecYEG and auxiliary proteins SecDF-YajC and YidC. Requires Zn(2+) as cofactor.

It is found in the cell inner membrane. The protein localises to the cytoplasm. The enzyme catalyses ATP + H2O + cellular proteinSide 1 = ADP + phosphate + cellular proteinSide 2.. In terms of biological role, part of the Sec protein translocase complex. Interacts with the SecYEG preprotein conducting channel. Has a central role in coupling the hydrolysis of ATP to the transfer of proteins into and across the cell membrane, serving both as a receptor for the preprotein-SecB complex and as an ATP-driven molecular motor driving the stepwise translocation of polypeptide chains across the membrane. This chain is Protein translocase subunit SecA, found in Burkholderia pseudomallei (strain K96243).